Reading from the N-terminus, the 238-residue chain is Uridylate kinase (238 aa).

An ATP-binding site is contributed by 12-15 (KLSG). Residue Gly54 coordinates UMP. Residues Gly55 and Arg59 each contribute to the ATP site. UMP contacts are provided by residues Asp74 and 135 to 142 (TGNPFFTT). The ATP site is built by Thr162, Tyr168, and Asp171.

Belongs to the UMP kinase family. Homohexamer.

Its subcellular location is the cytoplasm. The enzyme catalyses UMP + ATP = UDP + ADP. It functions in the pathway pyrimidine metabolism; CTP biosynthesis via de novo pathway; UDP from UMP (UMPK route): step 1/1. Its activity is regulated as follows. Inhibited by UTP. Its function is as follows. Catalyzes the reversible phosphorylation of UMP to UDP. The sequence is that of Uridylate kinase from Bordetella bronchiseptica (strain ATCC BAA-588 / NCTC 13252 / RB50) (Alcaligenes bronchisepticus).